We begin with the raw amino-acid sequence, 610 residues long: POU domain, class 6, transcription factor 1 (610 aa).

Residues 55 to 87 (SSAGAAESGGDEEGSGQSLEATEEAQLDGPVTT) form a disordered region. The POU-specific domain maps to 448–522 (EEAINLEEIR…VLERWLAEAE (75 aa)). Residues 543 to 602 (KRKRRTSFTPQAIEVLNTYFEKNSLPTGQEITEIAKELNYDREVVRVWFCNRRQTLKNTS) constitute a DNA-binding region (homeobox).

It belongs to the POU transcription factor family. Class-6 subfamily. Ubiquitously expressed during embryogenesis.

It localises to the nucleus. Its function is as follows. Transcription factor that binds with high affinity to the motif 5'-TAATGARAT-3'. This Danio rerio (Zebrafish) protein is POU domain, class 6, transcription factor 1 (pou6f1).